The primary structure comprises 195 residues: Large ribosomal subunit protein uL18 (195 aa).

This sequence belongs to the universal ribosomal protein uL18 family. As to quaternary structure, part of the 50S ribosomal subunit. Contacts the 5S and 23S rRNAs.

Its function is as follows. This is one of the proteins that bind and probably mediate the attachment of the 5S RNA into the large ribosomal subunit, where it forms part of the central protuberance. The chain is Large ribosomal subunit protein uL18 from Methanococcus vannielii.